The sequence spans 967 residues: Leucine--tRNA ligase (967 aa).

The 'HIGH' region motif lies at 43-53; it reads PYLSGHLHVGH. The 'KMSKS' region motif lies at 650–654; it reads KMSKS. Residue Lys653 participates in ATP binding.

The protein belongs to the class-I aminoacyl-tRNA synthetase family.

It is found in the cytoplasm. The enzyme catalyses tRNA(Leu) + L-leucine + ATP = L-leucyl-tRNA(Leu) + AMP + diphosphate. This is Leucine--tRNA ligase from Thermococcus onnurineus (strain NA1).